The sequence spans 1495 residues: Collagen alpha-1(XVII) chain (1495 aa).

A compositionally biased stretch (basic and acidic residues) spans 1-17 (MDSVTKKTRQDGSEVTE). Residues 1–138 (MDSVTKKTRQ…VRLQSASPSG (138 aa)) are disordered. The Cytoplasmic segment spans residues 1-435 (MDSVTKKTRQ…CGSCCSWWKW (435 aa)). Residues 1 to 535 (MDSVTKKTRQ…IERGYFRGER (535 aa)) are nonhelical region (NC16). A compositionally biased stretch (polar residues) spans 19–32 (QGGSSSGLKTSSHT). The segment covering 51–63 (SSGSGRLNSSSSG) has biased composition (low complexity). 2 stretches are compositionally biased toward polar residues: residues 64-80 (YRQT…SPGS) and 95-104 (EGSSSANSSP). A helical; Signal-anchor for type II membrane protein membrane pass occupies residues 436-456 (LLGLLLAWLLLLGLLFGLIAL). The Extracellular segment spans residues 457-1495 (AEEVRKLKSR…GRRRRRSVGV (1039 aa)). Disordered stretches follow at residues 532–824 (RGER…EKGS), 847–999 (DLQG…SSSQ), 1160–1185 (EFSG…SSGI), 1201–1226 (SISG…TGLL), 1251–1278 (RSYI…LVAG), 1295–1336 (GGSI…GSYG), and 1396–1416 (MSYT…PGIS). Residues 536–1482 (GEPGMKGDMG…KGEKGEKGEQ (947 aa)) form a triple-helical region region. 2 stretches are compositionally biased toward low complexity: residues 702–711 (PGAKGPAGQA) and 761–773 (RPGA…APGK). Residues 786-807 (PGPPGPPGPIGPTGPPGVPGPV) are compositionally biased toward pro residues. A compositionally biased stretch (low complexity) spans 809-818 (PAGLPGQQGP). Pro residues-rich tracts occupy residues 871–886 (PRGP…PPGR), 901–910 (PPGPPGPPGP), 946–955 (PPGPPGPPGP), 981–993 (PPGP…PPGP), 1167–1179 (PPGP…PPGI), 1208–1218 (PPGPPGPPGPP), and 1257–1269 (PPGP…PPGP). Over residues 1296–1308 (GSIGAEGSHGGSL) the composition is skewed to gly residues. Positions 1309–1336 (GASSSYGSSMSSSMSSYSASMGSDGSYG) are enriched in low complexity. A compositionally biased stretch (pro residues) spans 1403 to 1413 (PPGPPGPPGPP). The N-linked (GlcNAc...) asparagine glycan is linked to asparagine 1424. Residues 1435–1495 (THGTVRGPPG…GRRRRRSVGV (61 aa)) form a disordered region. Residues 1472–1481 (PKGEKGEKGE) are compositionally biased toward basic and acidic residues. Residues 1483–1495 (MYSGRRRRRSVGV) form a nonhelical region (NC1) region. Over residues 1486 to 1495 (GRRRRRSVGV) the composition is skewed to basic residues.

As to quaternary structure, homotrimers of alpha 1(XVII)chains. Post-translationally, the intracellular/endo domain is disulfide-linked. Prolines at the third position of the tripeptide repeating unit (G-X-Y) are hydroxylated in some or all of the chains. In terms of processing, the ectodomain is shedded from the surface of keratinocytes resulting in a 120-kDa soluble form, also named as 120 kDa linear IgA disease antigen homolog. The shedding is mediated by membrane-bound metalloproteases. In terms of tissue distribution, cornea specific.

The protein resides in the cell junction. The protein localises to the hemidesmosome. It is found in the membrane. Its subcellular location is the secreted. It localises to the extracellular space. The protein resides in the extracellular matrix. The protein localises to the basement membrane. Functionally, may play a role in the integrity of hemidesmosome and the attachment of basal keratinocytes to the underlying basement membrane. In terms of biological role, the 120 kDa linear IgA disease antigen homolog is an anchoring filament component involved in dermal-epidermal cohesion. This Gallus gallus (Chicken) protein is Collagen alpha-1(XVII) chain (COL17A1).